A 308-amino-acid chain; its full sequence is Bifunctional protein FolD (308 aa).

NADP(+)-binding positions include 171 to 173 (GRS), Ser198, and Ile239.

This sequence belongs to the tetrahydrofolate dehydrogenase/cyclohydrolase family. In terms of assembly, homodimer.

The enzyme catalyses (6R)-5,10-methylene-5,6,7,8-tetrahydrofolate + NADP(+) = (6R)-5,10-methenyltetrahydrofolate + NADPH. The catalysed reaction is (6R)-5,10-methenyltetrahydrofolate + H2O = (6R)-10-formyltetrahydrofolate + H(+). Its pathway is one-carbon metabolism; tetrahydrofolate interconversion. Its function is as follows. Catalyzes the oxidation of 5,10-methylenetetrahydrofolate to 5,10-methenyltetrahydrofolate and then the hydrolysis of 5,10-methenyltetrahydrofolate to 10-formyltetrahydrofolate. This is Bifunctional protein FolD from Borreliella burgdorferi (strain ATCC 35210 / DSM 4680 / CIP 102532 / B31) (Borrelia burgdorferi).